We begin with the raw amino-acid sequence, 137 residues long: Large ribosomal subunit protein uL16 (137 aa).

Positions 1–14 are enriched in basic residues; it reads MLQPNRRKFRKEHK. The segment at 1–22 is disordered; the sequence is MLQPNRRKFRKEHKGRNEGLAT.

The protein belongs to the universal ribosomal protein uL16 family. As to quaternary structure, part of the 50S ribosomal subunit.

Functionally, binds 23S rRNA and is also seen to make contacts with the A and possibly P site tRNAs. The sequence is that of Large ribosomal subunit protein uL16 from Dechloromonas aromatica (strain RCB).